Consider the following 732-residue polypeptide: E3 ubiquitin-protein ligase RNF19B (732 aa).

Residues 1-109 form a disordered region; sequence MGSEKDSESP…PEEDEAAEGG (109 aa). The tract at residues 1 to 315 is required for ubiquitin ligase activity and for protection against staurosporin-induced cell death; it reads MGSEKDSESP…VCGCEFCWLC (315 aa). Pro residues predominate over residues 54–71; the sequence is AEPPPPAAPPPPPPPAPA. Over residues 72 to 99 the composition is skewed to low complexity; that stretch reads PVEAQAPPVEALPSEPAAEAEAEAVAAG. Residues 100 to 109 show a composition bias toward acidic residues; the sequence is PEEDEAAEGG. The segment at 112–334 is TRIAD supradomain; it reads EEVECPLCLV…LSPSGCTFWG (223 aa). Zn(2+) is bound by residues Cys-116, Cys-119, Cys-139, Cys-142, Cys-203, Cys-208, Cys-225, Cys-230, Cys-235, Cys-238, His-243, Cys-248, Cys-284, and Cys-287. An RING-type 1 zinc finger spans residues 116–165; sequence CPLCLVRLPPERAPRLLSCPHRSCRDCLRHYLRLEISESRVPISCPECSE. Residues 183 to 248 form an IBR-type zinc finger; sequence HKYEEFMLRR…KQIWHPNQTC (66 aa). The RING-type 2; atypical zinc-finger motif lies at 284–315; the sequence is CPRCSAYIIKMNDGSCNHMTCAVCGCEFCWLC. The active site involves Cys-299. Residues Cys-304, Cys-307, Cys-312, Cys-315, His-323, and Cys-330 each contribute to the Zn(2+) site. Transmembrane regions (helical) follow at residues 351–371 and 412–432; these read LIGAPVGISLIAGIAIPAMVI and VIAAVSVGIGVPIMLAYVYGV. Disordered stretches follow at residues 598–644 and 660–732; these read QLVS…QSCE and QPES…YEVE. Residues 674–683 show a composition bias toward acidic residues; the sequence is QSDDVPDITS.

This sequence belongs to the RBR family. RNF19 subfamily. Interacts with UBE2L3, UBE2L6 and UCKL1. As to expression, expressed specifically in natural killer cells, activated macrophages and cytotoxic T-cells. Present in macrophages (at protein level). Ubiquitously expressed with high expression in testis.

It is found in the cytoplasmic granule membrane. It localises to the endoplasmic reticulum membrane. It catalyses the reaction [E2 ubiquitin-conjugating enzyme]-S-ubiquitinyl-L-cysteine + [acceptor protein]-L-lysine = [E2 ubiquitin-conjugating enzyme]-L-cysteine + [acceptor protein]-N(6)-ubiquitinyl-L-lysine.. It functions in the pathway protein modification; protein ubiquitination. Functionally, E3 ubiquitin-protein ligase which accepts ubiquitin from E2 ubiquitin-conjugating enzymes UBE2L3 and UBE2L6 in the form of a thioester and then directly transfers the ubiquitin to targeted substrates, such as UCKL1. Involved in the cytolytic activity of natural killer cells and cytotoxic T-cells. Protects against staurosporin-induced cell death. In Mus musculus (Mouse), this protein is E3 ubiquitin-protein ligase RNF19B (Rnf19b).